Consider the following 143-residue polypeptide: Large ribosomal subunit protein uL11 (143 aa).

This sequence belongs to the universal ribosomal protein uL11 family. As to quaternary structure, part of the ribosomal stalk of the 50S ribosomal subunit. Interacts with L10 and the large rRNA to form the base of the stalk. L10 forms an elongated spine to which L12 dimers bind in a sequential fashion forming a multimeric L10(L12)X complex. One or more lysine residues are methylated.

Its function is as follows. Forms part of the ribosomal stalk which helps the ribosome interact with GTP-bound translation factors. This is Large ribosomal subunit protein uL11 from Salinispora tropica (strain ATCC BAA-916 / DSM 44818 / JCM 13857 / NBRC 105044 / CNB-440).